The chain runs to 124 residues: S-adenosylmethionine decarboxylase proenzyme (124 aa).

Catalysis depends on serine 63, which acts as the Schiff-base intermediate with substrate; via pyruvic acid. The residue at position 63 (serine 63) is a Pyruvic acid (Ser); by autocatalysis. The active-site Proton acceptor; for processing activity is histidine 68. Cysteine 83 (proton donor; for catalytic activity) is an active-site residue.

Belongs to the prokaryotic AdoMetDC family. Type 1 subfamily. As to quaternary structure, heterotetramer of two alpha and two beta chains arranged as a dimer of alpha/beta heterodimers. Pyruvate serves as cofactor. Post-translationally, is synthesized initially as an inactive proenzyme. Formation of the active enzyme involves a self-maturation process in which the active site pyruvoyl group is generated from an internal serine residue via an autocatalytic post-translational modification. Two non-identical subunits are generated from the proenzyme in this reaction, and the pyruvate is formed at the N-terminus of the alpha chain, which is derived from the carboxyl end of the proenzyme. The post-translation cleavage follows an unusual pathway, termed non-hydrolytic serinolysis, in which the side chain hydroxyl group of the serine supplies its oxygen atom to form the C-terminus of the beta chain, while the remainder of the serine residue undergoes an oxidative deamination to produce ammonia and the pyruvoyl group blocking the N-terminus of the alpha chain.

It carries out the reaction S-adenosyl-L-methionine + H(+) = S-adenosyl 3-(methylsulfanyl)propylamine + CO2. It participates in amine and polyamine biosynthesis; S-adenosylmethioninamine biosynthesis; S-adenosylmethioninamine from S-adenosyl-L-methionine: step 1/1. Catalyzes the decarboxylation of S-adenosylmethionine to S-adenosylmethioninamine (dcAdoMet), the propylamine donor required for the synthesis of the polyamines spermine and spermidine from the diamine putrescine. The protein is S-adenosylmethionine decarboxylase proenzyme of Anoxybacillus flavithermus (strain DSM 21510 / WK1).